A 526-amino-acid polypeptide reads, in one-letter code: Reelin domain-containing protein 1 (526 aa).

The N-terminal stretch at 1–23 (MRMQAALVGWACTTLCLASCSSA) is a signal peptide. The 156-residue stretch at 24–179 (FSHGASTVAC…SAHSDDRMEP (156 aa)) folds into the Reelin domain. The Extracellular portion of the chain corresponds to 24-443 (FSHGASTVAC…PLGIQLRTPQ (420 aa)). Disordered stretches follow at residues 242-272 (DAET…PTLE), 294-336 (FASS…TVTQ), and 370-398 (LQTS…LPQS). Residues 245–271 (TLSQPSSHTATEGSINQQPSGDSNPTL) show a composition bias toward polar residues. Residues 385–396 (SEASRASASFLP) are compositionally biased toward polar residues. The helical transmembrane segment at 444–462 (LGILLCLSATLGMALAAGL) threads the bilayer. Over 463–526 (RYLHTQYCHQ…PSVGSKKTVL (64 aa)) the chain is Cytoplasmic.

Its subcellular location is the membrane. The protein is Reelin domain-containing protein 1 of Homo sapiens (Human).